We begin with the raw amino-acid sequence, 778 residues long: Zinc finger protein 749 (778 aa).

One can recognise a KRAB domain in the interval 8 to 101 (MVFEDVAIYF…ILKDILHLAE (94 aa)). The C2H2-type 1; degenerate zinc-finger motif lies at 152–174 (FTCTQGGKDFTASSDLLQQQVLN). The C2H2-type 2; degenerate zinc-finger motif lies at 196 to 218 (FNSSQGGKDFCHQHGLFEHQKTH). The C2H2-type 3; degenerate zinc-finger motif lies at 224 to 246 (YEFSECGELFRYNSNLIKYQQNH). The C2H2-type 4; degenerate zinc-finger motif lies at 252-274 (YEGTEYGKTFIRKSNLVQHQKIH). C2H2-type zinc fingers lie at residues 298–320 (YECT…QKTH), 326–348 (YECN…QKVH), 354–376 (YECS…QRVH), 382–404 (FECS…QRVH), 410–432 (YKCS…LKIH), and 438–460 (YECT…QKIH). Residue K466 is modified to N6-acetyllysine. 2 consecutive C2H2-type zinc fingers follow at residues 483–505 (YTCS…QKIH) and 511–533 (YECT…EKIH). An N6-acetyllysine modification is found at K539. A C2H2-type 13; degenerate zinc finger spans residues 556–578 (YVCSECGKAFLTQAHLDGHQKIQ). C2H2-type zinc fingers lie at residues 584–606 (YECN…QRIH), 612–634 (YKCS…QKVH), and 640–662 (YECS…QRVH). Residues 668–690 (YECSNCGKFLRYRSTFIKHHKVC) form a C2H2-type 17; atypical zinc finger. The C2H2-type 18 zinc finger occupies 696 to 718 (HECSKCRELFRTKSSLIIHQQSH). The C2H2-type 19; degenerate zinc finger occupies 751-773 (YECGESSKVFKYNSSLIKHQIIH). Residues K761 and K768 each participate in a glycyl lysine isopeptide (Lys-Gly) (interchain with G-Cter in SUMO2) cross-link.

Belongs to the krueppel C2H2-type zinc-finger protein family.

It localises to the nucleus. In terms of biological role, may be involved in transcriptional regulation. This Homo sapiens (Human) protein is Zinc finger protein 749 (ZNF749).